A 336-amino-acid chain; its full sequence is Probable allantoicase (336 aa).

It belongs to the allantoicase family.

It catalyses the reaction allantoate + H2O = (S)-ureidoglycolate + urea. Its pathway is nitrogen metabolism; (S)-allantoin degradation; (S)-ureidoglycolate from allantoate (aminidohydrolase route): step 1/1. The protein is Probable allantoicase of Acinetobacter baumannii (strain AYE).